The following is a 415-amino-acid chain: MRIPVDPSTSRRFTPPSPAFPCGGGGGKMGENSGALSAQAAVGPGGRARPEVRSMVDVLADHAGELVRTDSPNFLCSVLPSHWRCNKTLPVAFKVVALGDVPDGTVVTVMAGNDENYSAELRNASAVMKNQVARFNDLRFVGRSGRGKSFTLTITVFTNPTQVATYHRAIKVTVDGPREPRRHRQKLEDQTKPFPDRFGDLERLRMRVTPSTPSPRGSLSTTSHFSSQPQTPIQGTSELNPFSDPRQFDRSFPTLPTLTESRFPDPRMHYPGAMSAAFPYSATPSGTSISSLSVAGMPATSRFHHTYLPPPYPGAPQNQSGPFQANPSPYHLYYGTSSGSYQFSMVAGSSSGGDRSPTRMLASCTSSAASVAAGNLMNPSLGGQSDGVEADGSHSNSPTALSTPGRMDEAVWRPY.

3 disordered regions span residues 1 to 48, 176 to 266, and 375 to 415; these read MRIP…GGRA, GPRE…FPDP, and NLMN…WRPY. The Runt domain maps to 54–182; that stretch reads SMVDVLADHA…TVDGPREPRR (129 aa). Residues 186-205 show a composition bias toward basic and acidic residues; it reads KLEDQTKPFPDRFGDLERLR. Residue Lys192 forms a Glycyl lysine isopeptide (Lys-Gly) (interchain with G-Cter in SUMO2) linkage. Positions 209 to 240 are enriched in polar residues; it reads TPSTPSPRGSLSTTSHFSSQPQTPIQGTSELN. Ser243 bears the Phosphoserine mark. The span at 393 to 402 shows a compositional bias: polar residues; that stretch reads SHSNSPTALS. Positions 406 to 415 are enriched in basic and acidic residues; the sequence is RMDEAVWRPY.

In terms of assembly, heterodimer with CBFB. RUNX3 binds DNA as a monomer and through the Runt domain. DNA-binding is increased by heterodimerization. Interacts with TLE1 and SUV39H1. The tyrosine phosphorylated form (via runt domain) interacts with SRC (via protein kinase domain). Interacts with FYN and LCK. Interacts with FOXP3. Interacts with ZFHX3. Interacts with TBX21. Post-translationally, phosphorylated on tyrosine residues by SRC. Phosphorylated by LCK and FYN. As to expression, expressed in gastric cancer tissues (at protein level).

It is found in the nucleus. Its subcellular location is the cytoplasm. In terms of biological role, forms the heterodimeric complex core-binding factor (CBF) with CBFB. RUNX members modulate the transcription of their target genes through recognizing the core consensus binding sequence 5'-TGTGGT-3', or very rarely, 5'-TGCGGT-3', within their regulatory regions via their runt domain, while CBFB is a non-DNA-binding regulatory subunit that allosterically enhances the sequence-specific DNA-binding capacity of RUNX. The heterodimers bind to the core site of a number of enhancers and promoters, including murine leukemia virus, polyomavirus enhancer, T-cell receptor enhancers, LCK, IL3 and GM-CSF promoters. May be involved in the control of cellular proliferation and/or differentiation. In association with ZFHX3, up-regulates CDKN1A promoter activity following TGF-beta stimulation. CBF complexes repress ZBTB7B transcription factor during cytotoxic (CD8+) T cell development. They bind to RUNX-binding sequence within the ZBTB7B locus acting as transcriptional silencer and allowing for cytotoxic T cell differentiation. CBF complexes binding to the transcriptional silencer is essential for recruitment of nuclear protein complexes that catalyze epigenetic modifications to establish epigenetic ZBTB7B silencing. Necessary for the development and survival of sensory neurons expressing parvalbumin. This is Runt-related transcription factor 3 (RUNX3) from Homo sapiens (Human).